Reading from the N-terminus, the 365-residue chain is 3-amino-4-hydroxybenzoate 4-O-methyltransferase (365 aa).

Positions 1–18 (MTVPENAQHTAPDQTQHT) are enriched in polar residues. Residues 1–32 (MTVPENAQHTAPDQTQHTAPDRTRQAQQAAPD) are disordered. S-adenosyl-L-methionine-binding positions include D227, 253–255 (GDF), and R270. H273 functions as the Proton acceptor in the catalytic mechanism.

Belongs to the class I-like SAM-binding methyltransferase superfamily. Cation-independent O-methyltransferase family.

The enzyme catalyses 3-amino-2,4-dihydroxybenzoate + S-adenosyl-L-methionine = 3-amino-2-hydroxy-4-methoxybenzoate + S-adenosyl-L-homocysteine + H(+). The protein operates within antibiotic biosynthesis. Functionally, part of a gene cluster involved in the biosynthesis of cremeomycin, a light-sensitive o-diazoquinone with antibacterial and antiproliferative effects. Catalyzes the methylation of the C4 hydroxyl group of 3-amino-2,4-dihydroxybenzoate (3,2,4-ADHBA) to form 3-amino-2-hydroxy-4-methoxybenzoate (3,2,4-AHMBA). In vitro, can also catalyze the methylation of 3-amino-4-hydroxybenzoate (3,4-AHBA). The sequence is that of 3-amino-4-hydroxybenzoate 4-O-methyltransferase from Streptomyces cremeus.